A 427-amino-acid polypeptide reads, in one-letter code: Tol-Pal system protein TolB (427 aa).

The signal sequence occupies residues 1-27; sequence MPVSLLRALLVFSLLCLGLSATRAAHA.

The protein belongs to the TolB family. The Tol-Pal system is composed of five core proteins: the inner membrane proteins TolA, TolQ and TolR, the periplasmic protein TolB and the outer membrane protein Pal. They form a network linking the inner and outer membranes and the peptidoglycan layer.

It is found in the periplasm. Functionally, part of the Tol-Pal system, which plays a role in outer membrane invagination during cell division and is important for maintaining outer membrane integrity. The sequence is that of Tol-Pal system protein TolB from Thiobacillus denitrificans (strain ATCC 25259 / T1).